The primary structure comprises 160 residues: S-ribosylhomocysteine lyase (160 aa).

Fe cation contacts are provided by His57, His61, and Cys127.

The protein belongs to the LuxS family. As to quaternary structure, homodimer. Fe cation is required as a cofactor.

The enzyme catalyses S-(5-deoxy-D-ribos-5-yl)-L-homocysteine = (S)-4,5-dihydroxypentane-2,3-dione + L-homocysteine. Involved in the synthesis of autoinducer 2 (AI-2) which is secreted by bacteria and is used to communicate both the cell density and the metabolic potential of the environment. The regulation of gene expression in response to changes in cell density is called quorum sensing. Catalyzes the transformation of S-ribosylhomocysteine (RHC) to homocysteine (HC) and 4,5-dihydroxy-2,3-pentadione (DPD). The chain is S-ribosylhomocysteine lyase from Streptococcus agalactiae serotype V (strain ATCC BAA-611 / 2603 V/R).